The sequence spans 275 residues: Ribosomal RNA small subunit methyltransferase A (275 aa).

S-adenosyl-L-methionine-binding residues include Asn-19, Leu-21, Gly-46, Glu-71, Asp-94, and Asn-117.

This sequence belongs to the class I-like SAM-binding methyltransferase superfamily. rRNA adenine N(6)-methyltransferase family. RsmA subfamily.

It is found in the cytoplasm. The enzyme catalyses adenosine(1518)/adenosine(1519) in 16S rRNA + 4 S-adenosyl-L-methionine = N(6)-dimethyladenosine(1518)/N(6)-dimethyladenosine(1519) in 16S rRNA + 4 S-adenosyl-L-homocysteine + 4 H(+). Specifically dimethylates two adjacent adenosines (A1518 and A1519) in the loop of a conserved hairpin near the 3'-end of 16S rRNA in the 30S particle. May play a critical role in biogenesis of 30S subunits. The protein is Ribosomal RNA small subunit methyltransferase A of Burkholderia mallei (strain NCTC 10247).